The primary structure comprises 338 residues: Anthranilate phosphoribosyltransferase (338 aa).

5-phospho-alpha-D-ribose 1-diphosphate contacts are provided by residues G78, 81–82 (GD), S86, 88–91 (NIST), 106–114 (KHGNKSVTS), and S118. An anthranilate-binding site is contributed by G78. S90 is a Mg(2+) binding site. N109 is an anthranilate binding site. R163 lines the anthranilate pocket. Residues D222 and E223 each contribute to the Mg(2+) site.

The protein belongs to the anthranilate phosphoribosyltransferase family. Homodimer. Requires Mg(2+) as cofactor.

The catalysed reaction is N-(5-phospho-beta-D-ribosyl)anthranilate + diphosphate = 5-phospho-alpha-D-ribose 1-diphosphate + anthranilate. Its pathway is amino-acid biosynthesis; L-tryptophan biosynthesis; L-tryptophan from chorismate: step 2/5. In terms of biological role, catalyzes the transfer of the phosphoribosyl group of 5-phosphorylribose-1-pyrophosphate (PRPP) to anthranilate to yield N-(5'-phosphoribosyl)-anthranilate (PRA). This Staphylococcus saprophyticus subsp. saprophyticus (strain ATCC 15305 / DSM 20229 / NCIMB 8711 / NCTC 7292 / S-41) protein is Anthranilate phosphoribosyltransferase.